Reading from the N-terminus, the 2596-residue chain is Cadherin EGF LAG seven-pass G-type receptor fmi-1 (2596 aa).

The first 22 residues, 1-22, serve as a signal peptide directing secretion; sequence MMLDRIMFLLFFILSLVIGSFS. Over 23–2229 the chain is Extracellular; the sequence is EYLDDKYYST…IVRVAQMDNM (2207 aa). Cadherin domains lie at 166–270, 271–375, 376–479, 480–581, 582–682, 683–784, 785–892, and 893–1000; these read QQEK…SPIF, EKDS…APVF, ASDS…APTL, IAAQ…APTF, DKKE…APYF, NDHP…SPQF, TSSS…APTF, and EQLS…KPAL. N-linked (GlcNAc...) asparagine glycans are attached at residues Asn381, Asn387, Asn562, Asn587, Asn765, and Asn824. Residues Asn1030 and Asn1263 are each glycosylated (N-linked (GlcNAc...) asparagine). Positions 1251-1287 constitute an EGF-like 1 domain; sequence RIDECYRGRCSNNSTCVAFENTYQCECKPGWIGRHCE. Intrachain disulfides connect Cys1255/Cys1266, Cys1260/Cys1275, Cys1277/Cys1286, Cys1497/Cys1526, Cys1533/Cys1546, Cys1540/Cys1555, Cys1557/Cys1567, Cys1709/Cys1732, Cys1738/Cys1750, Cys1744/Cys1759, Cys1761/Cys1770, and Cys1780/Cys1785. Residues 1333–1526 enclose the Laminin G-like 1 domain; that stretch reads SVSFDGEGLL…HKVGQVHEGC (194 aa). Residues 1529–1568 enclose the EGF-like 2 domain; the sequence is RKDFCSTSDGQCSATSKCVNRWGGRICSCPQSVHSTGECV. Positions 1577–1732 constitute a Laminin G-like 2 domain; that stretch reads RGHSLFEEES…KKKGKTRAGC (156 aa). EGF-like domains lie at 1734–1771 and 1776–1808; these read VPNR…DTCL and VANV…KNCQ. The N-linked (GlcNAc...) asparagine glycan is linked to Asn1789. A disulfide bridge connects residues Cys1798 and Cys1807. N-linked (GlcNAc...) asparagine glycosylation is found at Asn1965, Asn1992, Asn2152, Asn2195, and Asn2228. In terms of domain architecture, GAIN-B spans 2054–2219; that stretch reads EYSTLISKLW…TMFVNDQSSS (166 aa). Cysteines 2174 and 2201 form a disulfide. The interval 2174-2219 is GPS; that stretch reads CVRFDEKSGTWTARGAALIGLNLTHAACEYNRIGVFTMFVNDQSSS. A helical transmembrane segment spans residues 2230–2250; the sequence is TSPAIAGVALFLCFLSILLTL. Over 2251-2261 the chain is Cytoplasmic; sequence SRRSLKTHSVR. The helical transmembrane segment at 2262–2282 threads the bilayer; that stretch reads IGFILFFAINILNLFFVHKTA. At 2283–2292 the chain is on the extracellular side; it reads INQAYCPVRN. A helical transmembrane segment spans residues 2293–2313; it reads AMLSFTSSAPFAWLFLYGLYI. The Cytoplasmic portion of the chain corresponds to 2314 to 2326; the sequence is YRMLADGSSSPSL. A helical transmembrane segment spans residues 2327 to 2347; it reads TTSLLVGIVFPCLISFTTFFV. The Extracellular segment spans residues 2348–2356; the sequence is TDQCSLSPH. The chain crosses the membrane as a helical span at residues 2357-2377; sequence LWLFWCIILPIGLFLLLSFYA. Residues 2378-2401 are Cytoplasmic-facing; the sequence is AATSVLVSLHKKYDVFVAKYNVKR. Residues 2402 to 2422 traverse the membrane as a helical segment; that stretch reads AVFQHFILTIFTLGMTLTGLF. The Extracellular portion of the chain corresponds to 2423-2437; sequence ANQLPLPMEIMEISQ. A helical membrane pass occupies residues 2438-2458; it reads SIIYLIAALVIFLWCVCDITT. The Cytoplasmic portion of the chain corresponds to 2459–2596; that stretch reads KASDSNPSMW…KNTTSTFNRE (138 aa).

This sequence belongs to the G-protein coupled receptor 2 family. LN-TM7 subfamily. In terms of tissue distribution, expressed in a region of neuropil around the nerve ring and the ventral cord (at protein level). Expressed in the head, tail, ventral cord, nerve ring and neurons including HSN neurons. Expressed in DA, VA, and VB and weakly in the DB cholinergic neurons. Not expressed in ventral D-type GABAergic motorneurons.

The protein localises to the cell membrane. The protein resides in the cell projection. It is found in the axon. Its subcellular location is the dendrite. During ventral cord development, required for axon fasciculation and navigation, mediating both pioneer and follower axon extension, guidance and track formation. Acts in CEPsh glia and SubL neurons to guide follower axons into the nerve ring. Promotes motorneuron development by positively regulating the extension of the anterior neurite of ventral D-type GABAergic motorneurons along the anterior-posterior axis of the ventral nerve cord. Plays a role in synaptogenesis by regulating synaptic vesicle accumulation at GABAergic and cholinergic neuromuscular junctions. This Caenorhabditis elegans protein is Cadherin EGF LAG seven-pass G-type receptor fmi-1.